We begin with the raw amino-acid sequence, 207 residues long: Octanoyltransferase (207 aa).

Residues 27 to 203 form the BPL/LPL catalytic domain; sequence ADTEDELWVV…HLETQLTPKA (177 aa). Residues 66–73, 133–135, and 146–148 contribute to the substrate site; these read RGGQITYH, SLG, and GLA. Cysteine 164 (acyl-thioester intermediate) is an active-site residue.

Belongs to the LipB family.

It is found in the cytoplasm. It carries out the reaction octanoyl-[ACP] + L-lysyl-[protein] = N(6)-octanoyl-L-lysyl-[protein] + holo-[ACP] + H(+). It participates in protein modification; protein lipoylation via endogenous pathway; protein N(6)-(lipoyl)lysine from octanoyl-[acyl-carrier-protein]: step 1/2. Its function is as follows. Catalyzes the transfer of endogenously produced octanoic acid from octanoyl-acyl-carrier-protein onto the lipoyl domains of lipoate-dependent enzymes. Lipoyl-ACP can also act as a substrate although octanoyl-ACP is likely to be the physiological substrate. This is Octanoyltransferase from Neisseria gonorrhoeae (strain ATCC 700825 / FA 1090).